Consider the following 461-residue polypeptide: Asparagine--tRNA ligase (461 aa).

It belongs to the class-II aminoacyl-tRNA synthetase family. Homodimer.

The protein resides in the cytoplasm. The catalysed reaction is tRNA(Asn) + L-asparagine + ATP = L-asparaginyl-tRNA(Asn) + AMP + diphosphate + H(+). The polypeptide is Asparagine--tRNA ligase (Geotalea uraniireducens (strain Rf4) (Geobacter uraniireducens)).